A 1050-amino-acid chain; its full sequence is uncharacterized protein (1050 aa).

Coiled-coil stretches lie at residues 1 to 420 (MEKV…TAKM), 463 to 627 (YSLL…IREL), and 692 to 981 (NDSK…NLLS).

This is an uncharacterized protein from Arabidopsis thaliana (Mouse-ear cress).